Consider the following 288-residue polypeptide: Thymidylate synthase (288 aa).

Arg21 is a dUMP binding site. Asn51 lines the (6R)-5,10-methylene-5,6,7,8-tetrahydrofolate pocket. DUMP is bound at residue 150–151; sequence RR. The active-site Nucleophile is Cys170. DUMP is bound by residues 190-193, Asn201, and 231-233; these read RSGD and HIY. (6R)-5,10-methylene-5,6,7,8-tetrahydrofolate is bound at residue Asp193. Ala287 serves as a coordination point for (6R)-5,10-methylene-5,6,7,8-tetrahydrofolate.

It belongs to the thymidylate synthase family. Bacterial-type ThyA subfamily. Homodimer.

The protein resides in the cytoplasm. It carries out the reaction dUMP + (6R)-5,10-methylene-5,6,7,8-tetrahydrofolate = 7,8-dihydrofolate + dTMP. The protein operates within pyrimidine metabolism; dTTP biosynthesis. Functionally, catalyzes the reductive methylation of 2'-deoxyuridine-5'-monophosphate (dUMP) to 2'-deoxythymidine-5'-monophosphate (dTMP) while utilizing 5,10-methylenetetrahydrofolate (mTHF) as the methyl donor and reductant in the reaction, yielding dihydrofolate (DHF) as a by-product. This enzymatic reaction provides an intracellular de novo source of dTMP, an essential precursor for DNA biosynthesis. The chain is Thymidylate synthase from Aster yellows witches'-broom phytoplasma (strain AYWB).